Here is an 89-residue protein sequence, read N- to C-terminus: MSLSTEATAKIVSEFGRDANDTGSTDVQVALLTAQINHLQGHFAEHKKDHHSRRGLLRMVSQRRKLLDYLKRKDVARYTALIERLGLRR.

Belongs to the universal ribosomal protein uS15 family. Part of the 30S ribosomal subunit. Forms a bridge to the 50S subunit in the 70S ribosome, contacting the 23S rRNA.

In terms of biological role, one of the primary rRNA binding proteins, it binds directly to 16S rRNA where it helps nucleate assembly of the platform of the 30S subunit by binding and bridging several RNA helices of the 16S rRNA. Its function is as follows. Forms an intersubunit bridge (bridge B4) with the 23S rRNA of the 50S subunit in the ribosome. The polypeptide is Small ribosomal subunit protein uS15 (Salmonella schwarzengrund (strain CVM19633)).